The primary structure comprises 361 residues: S-adenosylmethionine decarboxylase proenzyme (361 aa).

Residues Glu13 and Glu16 contribute to the active site. The active-site Schiff-base intermediate with substrate; via pyruvic acid is Ser73. Ser73 is subject to Pyruvic acid (Ser); by autocatalysis. Residue Cys87 is the Proton donor; for catalytic activity of the active site. Residues Ser236 and His249 each act as proton acceptor; for processing activity in the active site.

The protein belongs to the eukaryotic AdoMetDC family. The cofactor is pyruvate. Is synthesized initially as an inactive proenzyme. Formation of the active enzyme involves a self-maturation process in which the active site pyruvoyl group is generated from an internal serine residue via an autocatalytic post-translational modification. Two non-identical subunits are generated from the proenzyme in this reaction, and the pyruvate is formed at the N-terminus of the alpha chain, which is derived from the carboxyl end of the proenzyme. The post-translation cleavage follows an unusual pathway, termed non-hydrolytic serinolysis, in which the side chain hydroxyl group of the serine supplies its oxygen atom to form the C-terminus of the beta chain, while the remainder of the serine residue undergoes an oxidative deamination to produce ammonia and the pyruvoyl group blocking the N-terminus of the alpha chain.

The catalysed reaction is S-adenosyl-L-methionine + H(+) = S-adenosyl 3-(methylsulfanyl)propylamine + CO2. It functions in the pathway amine and polyamine biosynthesis; S-adenosylmethioninamine biosynthesis; S-adenosylmethioninamine from S-adenosyl-L-methionine: step 1/1. The chain is S-adenosylmethionine decarboxylase proenzyme (SAMDC1) from Nicotiana sylvestris (Wood tobacco).